The primary structure comprises 448 residues: Tubulin beta chain (448 aa).

Residues Gln11, Glu69, Ser138, Gly142, Thr143, Gly144, Asn204, and Asn226 each contribute to the GTP site. Glu69 provides a ligand contact to Mg(2+). The tract at residues 426–448 (QDAGIDEEEEEYEEEAPVDEPLE) is disordered. Residues 429–448 (GIDEEEEEYEEEAPVDEPLE) show a composition bias toward acidic residues.

This sequence belongs to the tubulin family. In terms of assembly, dimer of alpha and beta chains. A typical microtubule is a hollow water-filled tube with an outer diameter of 25 nm and an inner diameter of 15 nM. Alpha-beta heterodimers associate head-to-tail to form protofilaments running lengthwise along the microtubule wall with the beta-tubulin subunit facing the microtubule plus end conferring a structural polarity. Microtubules usually have 13 protofilaments but different protofilament numbers can be found in some organisms and specialized cells. The cofactor is Mg(2+).

It is found in the cytoplasm. The protein resides in the cytoskeleton. Functionally, tubulin is the major constituent of microtubules, a cylinder consisting of laterally associated linear protofilaments composed of alpha- and beta-tubulin heterodimers. Microtubules grow by the addition of GTP-tubulin dimers to the microtubule end, where a stabilizing cap forms. Below the cap, tubulin dimers are in GDP-bound state, owing to GTPase activity of alpha-tubulin. This chain is Tubulin beta chain (TUB2), found in Epichloe coenophiala (Tall fescue endophyte fungus).